The chain runs to 309 residues: Dicarboxylate carrier UCP2 (309 aa).

Over 1–16 (MVGFKATDVPPTATVK) the chain is Mitochondrial intermembrane. Solcar repeat units follow at residues 11–106 (PTAT…VKQF), 114–203 (AGIG…IKDA), and 212–297 (DDLP…LKRA). The tract at residues 16 to 63 (KFLGAGTAACIADLITFPLDTAKVRLQIQGERQGPVRAAASAQYRGVL) is important for interaction with long-chain fatty acids. Residues 17–40 (FLGAGTAACIADLITFPLDTAKVR) form a helical membrane-spanning segment. The Mitochondrial matrix segment spans residues 41-77 (LQIQGERQGPVRAAASAQYRGVLCTILTMVRTEGPRS). Residues 78 to 103 (LYSGLVAGLQRQMSFASVRIGLYDSV) form a helical membrane-spanning segment. Over 104 to 119 (KQFYTKGSEHAGIGSR) the chain is Mitochondrial intermembrane. Residues 120 to 145 (LLAGSTTGALAVAVAQPTDVVKVRFQ) traverse the membrane as a helical segment. Over 146–173 (AQARAGSGRRYQSTVDAYKTIAREEGFR) the chain is Mitochondrial matrix. Residues 174 to 199 (GLWKGTSPNVARNAIVNCAELVTYDL) traverse the membrane as a helical segment. At 200–217 (IKDALLKANLMTDDLPCH) the chain is on the mitochondrial intermembrane side. A helical membrane pass occupies residues 218–242 (FTSAFGAGFCTTVIASPVDVVKTRY). The Mitochondrial matrix portion of the chain corresponds to 243-268 (MNSALGQYSSAGHCALTMLQKEGPRA). The helical transmembrane segment at 269 to 294 (FYKGFMPSFLRLGSWNVVMFVTYEQL) threads the bilayer. An important for interaction with long-chain fatty acids region spans residues 278–285 (LRLGSWNV). Over 295–309 (KRALMAACTSREAPF) the chain is Mitochondrial intermembrane.

Belongs to the mitochondrial carrier (TC 2.A.29) family. Homotetramer. Adopts an asymmetrical dimer of dimers functional form. Interacts with MICU1 (when methylated); leading to decrease the calcium sensitivity of MICU1.

The protein resides in the mitochondrion inner membrane. It catalyses the reaction L-aspartate(out) + phosphate(in) + H(+)(in) = L-aspartate(in) + phosphate(out) + H(+)(out). The catalysed reaction is oxaloacetate(out) + phosphate(in) + H(+)(in) = oxaloacetate(in) + phosphate(out) + H(+)(out). It carries out the reaction (S)-malate(out) + phosphate(in) + H(+)(in) = (S)-malate(in) + phosphate(out) + H(+)(out). The enzyme catalyses malonate(out) + phosphate(in) + H(+)(in) = malonate(in) + phosphate(out) + H(+)(out). It catalyses the reaction sulfate(out) + phosphate(in) + H(+)(in) = sulfate(in) + phosphate(out) + H(+)(out). The catalysed reaction is (S)-malate(out) = (S)-malate(in). It carries out the reaction L-aspartate(out) = L-aspartate(in). The enzyme catalyses phosphate(in) = phosphate(out). It catalyses the reaction chloride(in) = chloride(out). The catalysed reaction is H(+)(in) = H(+)(out). It carries out the reaction a long-chain fatty acid(out) = a long-chain fatty acid(in). Its function is as follows. Antiporter that exports dicarboxylate intermediates of the Krebs cycle in exchange for phosphate plus a proton across the inner membrane of mitochondria, a process driven by mitochondrial motive force with an overall impact on glycolysis, glutaminolysis and glutathione-dependent redox balance. Continuous export of oxaloacetate and related four-carbon dicarboxylates from mitochondrial matrix into the cytosol negatively regulates the oxidation of acetyl-CoA substrates via the Krebs cycle lowering the ATP/ADP ratio and reactive oxygen species (ROS) production. May mediate inducible proton entry into the mitochondrial matrix affecting ATP turnover as a protection mechanism against oxidative stress. The proton currents are most likely associated with fatty acid flipping across the inner membrane of mitochondria in a metabolic process regulated by free fatty acids and purine nucleotides. Regulates the use of glucose as a source of energy. Required for glucose-induced DRP1-dependent mitochondrial fission and neuron activation in the ventromedial nucleus of the hypothalamus (VMH). This mitochondrial adaptation mechanism modulates the VMH pool of glucose-excited neurons with an impact on systemic glucose homeostasis. Regulates ROS levels and metabolic reprogramming of macrophages during the resolution phase of inflammation. Attenuates ROS production in response to IL33 to preserve the integrity of the Krebs cycle required for persistent production of itaconate and subsequent GATA3-dependent differentiation of inflammation-resolving alternatively activated macrophages. Can unidirectionally transport anions including L-malate, L-aspartate, phosphate and chloride ions. Does not mediate adaptive thermogenesis. This chain is Dicarboxylate carrier UCP2 (UCP2), found in Canis lupus familiaris (Dog).